The chain runs to 551 residues: Pentatricopeptide repeat-containing protein At3g13150 (551 aa).

The disordered stretch occupies residues 22–67 (ATAKSAKPRSQTKSTKFPSKLKASTASVGDGGQSSNDAKDSKNSKL). Residues 29 to 48 (PRSQTKSTKFPSKLKASTAS) show a composition bias toward polar residues. The segment covering 58 to 67 (DAKDSKNSKL) has biased composition (basic and acidic residues). 7 PPR repeats span residues 121–155 (SEDF…NCER), 156–191 (TVKS…GITP), 192–226 (DLVT…GFEP), 227–261 (DLIS…NLSP), 262–296 (NIRS…GISP), 297–331 (DVHT…GLTP), and 332–366 (DTVT…KLLS). Disordered stretches follow at residues 409-435 (GKKK…SPDT) and 449-551 (SSSD…LLDD). The span at 415-435 (SSPVSSSAKTTSTPVSSSPDT) shows a compositional bias: low complexity.

This sequence belongs to the PPR family. P subfamily.

The sequence is that of Pentatricopeptide repeat-containing protein At3g13150 from Arabidopsis thaliana (Mouse-ear cress).